The primary structure comprises 463 residues: Ataxin-10 homolog (463 aa).

This sequence belongs to the ataxin-10 family.

It localises to the cytoplasm. Functionally, may play a role in the regulation of cytokinesis. The sequence is that of Ataxin-10 homolog (CTR86) from Candida albicans (strain SC5314 / ATCC MYA-2876) (Yeast).